The chain runs to 578 residues: Moesin/ezrin/radixin homolog 1 (578 aa).

One can recognise an FERM domain in the interval 1 to 296 (MSPKALNVRV…GNHELYMRRR (296 aa)). A disordered region spans residues 463–555 (ASTTPQHHHV…HRENVRQGRD (93 aa)). Acidic residues predominate over residues 475 to 484 (DENENEEELT). Positions 492 to 555 (VSRDLDTDEH…HRENVRQGRD (64 aa)) are enriched in basic and acidic residues. Thr559 carries the post-translational modification Phosphothreonine.

As to quaternary structure, interacts with wgn. Interacts with Mer and arm at the adherens junction. Interacts with cytoskeletal actin at apical buds of microvilli in the precellularised embryo. Interacts with PCID2 (possibly via FERM domain). Post-translationally, phosphorylated on Thr-559. In the oocyte this phosphorylation is induced by phosphatidylinositol 4,5-bisphosphate (PtdIns[4,5]P(2)) generated by sktl.

The protein localises to the cell junction. It localises to the adherens junction. Its subcellular location is the cell projection. The protein resides in the microvillus. It is found in the rhabdomere. The protein localises to the cell membrane. It localises to the cytoplasm. Its subcellular location is the cytoskeleton. The protein resides in the cell cortex. It is found in the cilium. The protein localises to the flagellum. It localises to the nucleus. Its subcellular location is the nucleoplasm. The protein resides in the chromosome. In terms of biological role, involved in connections of major cytoskeletal structures to the plasma membrane. Together with wgn, involved in control of axon targeting of R8 and R2-R5 photoreceptors, independent of egr. In the nucleus, recruited to sites of active transcription by RNA polymerase II where it has a role in nuclear mRNA export together with the mRNA export factor PCID2 and other messenger ribonucleoprotein (mRNP) particles. This Drosophila melanogaster (Fruit fly) protein is Moesin/ezrin/radixin homolog 1 (Moe).